The sequence spans 279 residues: MLIIELLKAIFFGIIEGITEWLPVSSTGHLILVQEFIRLNQDKAFIEMFNIVIQLGAIIAVMLIYFERLNPFQPGKTAREVQLTWQLWLKVVIACIPSILIAVPLDNWFEAHFYFMVPIAIALIVYGIAFIWIEKQNAQQEPAVTDLARMSYKTAFFIGCFQVLSIVPGTSRSGATILGAIILGTSRTVAADFTFFLAIPTMFGYSGLKAVKFFLDGHHLDFAQVLILLVASLTAFVVSLLAIRFLTHYVKKHDFTIFGKYRIVLGSLLLIYSFFKFVF.

Helical transmembrane passes span 2-22 (LIIE…TEWL), 44-64 (AFIE…VMLI), 85-105 (WQLW…AVPL), 113-133 (FYFM…FIWI), 163-183 (VLSI…AIIL), 188-208 (TVAA…YSGL), 223-243 (AQVL…LLAI), and 255-275 (FTIF…YSFF).

It belongs to the UppP family.

Its subcellular location is the cell membrane. The enzyme catalyses di-trans,octa-cis-undecaprenyl diphosphate + H2O = di-trans,octa-cis-undecaprenyl phosphate + phosphate + H(+). Functionally, catalyzes the dephosphorylation of undecaprenyl diphosphate (UPP). Confers resistance to bacitracin. This is Undecaprenyl-diphosphatase from Streptococcus pyogenes serotype M12 (strain MGAS2096).